The chain runs to 947 residues: DNA topoisomerase 1 (947 aa).

One can recognise a Toprim domain in the interval 16–140 (RRLVIVESPT…VKRMVFHEIT (125 aa)). The Mg(2+) site is built by Glu22 and Asp109. The Topo IA-type catalytic domain occupies 155-614 (DIDLVDAQET…FYFGGNHGVS (460 aa)). Residues 189–194 (SAGRVQ) form an interaction with DNA region. Tyr343 (O-(5'-phospho-DNA)-tyrosine intermediate) is an active-site residue. Disordered stretches follow at residues 733–771 (VLPK…GSLL), 846–888 (KRAG…GETN), and 910–947 (ADRR…QSPR). Over residues 915–934 (RGPVKRPAKKARKVPAKKAA) the composition is skewed to basic residues.

The protein belongs to the type IA topoisomerase family. Monomer. Requires Mg(2+) as cofactor.

It carries out the reaction ATP-independent breakage of single-stranded DNA, followed by passage and rejoining.. In terms of biological role, releases the supercoiling and torsional tension of DNA, which is introduced during the DNA replication and transcription, by transiently cleaving and rejoining one strand of the DNA duplex. Introduces a single-strand break via transesterification at a target site in duplex DNA. The scissile phosphodiester is attacked by the catalytic tyrosine of the enzyme, resulting in the formation of a DNA-(5'-phosphotyrosyl)-enzyme intermediate and the expulsion of a 3'-OH DNA strand. The free DNA strand then undergoes passage around the unbroken strand, thus removing DNA supercoils. Finally, in the religation step, the DNA 3'-OH attacks the covalent intermediate to expel the active-site tyrosine and restore the DNA phosphodiester backbone. The protein is DNA topoisomerase 1 of Mycobacterium leprae (strain TN).